Here is a 139-residue protein sequence, read N- to C-terminus: Maximins 4/H3 type 7 (139 aa).

Residues 1–18 (MNFKYIVAVSFLIASAYA) form the signal peptide. Residues 19 to 43 (RSVQNDEQSLSQRDVLEEESLREIR) constitute a propeptide that is removed on maturation. N70 carries the post-translational modification Asparagine amide. The propeptide occupies 74–118 (TAEDHEVMKRLEAIMRDLDSLDYPEEASERETRGFNQDEIAKEKR). I138 carries the post-translational modification Isoleucine amide.

This sequence belongs to the bombinin family. Expressed by the skin glands.

The protein localises to the secreted. Its function is as follows. Maximin-4 shows antibacterial activity against both Gram-positive and Gram-negative bacteria. It also shows antimicrobial activity against the fungus C.albicans, but not against A.flavus nor P.uticale. It has little hemolytic activity. It does not possess a significant cytotoxicity against tumor cell lines. It does not possess a significant anti-HIV activity. Functionally, maximin-H3 shows antibacterial activity against both Gram-positive and Gram-negative bacteria. It also shows antimicrobial activity against the fungus C.albicans. Shows strong hemolytic activity. The sequence is that of Maximins 4/H3 type 7 from Bombina maxima (Giant fire-bellied toad).